Consider the following 229-residue polypeptide: PKHD-type hydroxylase RPA3479 (229 aa).

The Fe2OG dioxygenase domain occupies 78 to 180 (QIFPPLFNRY…RVASFFWLQS (103 aa)). Fe cation is bound by residues histidine 98, aspartate 100, and histidine 161. Residue arginine 171 participates in 2-oxoglutarate binding.

The cofactor is Fe(2+). L-ascorbate serves as cofactor.

This Rhodopseudomonas palustris (strain ATCC BAA-98 / CGA009) protein is PKHD-type hydroxylase RPA3479.